The following is a 399-amino-acid chain: Bone morphogenetic protein 8B (399 aa).

A signal peptide spans 1–19 (MAARPGLLWLLGLALCVLG). Residues 20–260 (GGHLSHPPHV…ANQSPVRAPR (241 aa)) constitute a propeptide that is removed on maturation. N-linked (GlcNAc...) asparagine glycosylation is found at asparagine 155 and asparagine 340. 3 disulfide bridges follow: cysteine 298-cysteine 364, cysteine 327-cysteine 396, and cysteine 331-cysteine 398.

This sequence belongs to the TGF-beta family. In terms of assembly, homodimer; disulfide-linked. As to expression, expressed in testis. Expressed in decidual cells of the uterus and in trophoblast cells of the labyrinthine region of the placenta and in the inner root sheath of hair follicles of early postnatal skin. Expressed in the extraembryonic ectoderm in pregastrula and gastrula stage mouse embryos. Expressed in brown adipose tissue and brain.

Its subcellular location is the secreted. Induces cartilage and bone formation. May be the osteoinductive factor responsible for the phenomenon of epithelial osteogenesis. Plays a role in calcium regulation and bone homeostasis. Involved in the generation of primordial germ cells; this function involves Bmp4 in a synergistic manner though separate receptor complexes seem to be involved. Required for the initiation and maintenance of spermatogenesis. Signaling protein involved in regulation of thermogenesis and energy balance. Proposed to increase the peripheral response of brown adipose tissue (BAT) to adrenergic stimulation while acting centrally in the hypothalamus to increase sympathetic output to BAT. The polypeptide is Bone morphogenetic protein 8B (Bmp8b) (Mus musculus (Mouse)).